The primary structure comprises 259 residues: MTNKIKIGHVHMSGCTGCLVSLADNNLGLIKILDDYADLVYCLTLADVRHIPEMDVALVEGSVCLQDHESVEDIKETRKKSKIVVALGSCACYGNITRFSRGGQHNQPQHESYLPIGDLIDVDVYIPGCPPSPELIRNVAVMAYLLLEGNEEQKELAGKYLKPLMDLAKRGTSGCFCDLMYDVINQGLCMGCGTCAASCPVHAITLEFGKPQGERDLCIKCGSCYGACPRSFFNLDVIPEFENINEIIANALKEGESDD.

2 consecutive 4Fe-4S ferredoxin-type domains span residues 180 to 208 (MYDV…TLEF) and 209 to 238 (GKPQ…LDVI). The [4Fe-4S] cluster site is built by Cys-189, Cys-192, Cys-195, Cys-199, Cys-218, Cys-221, Cys-224, and Cys-228.

It belongs to the FrhG family. Pentamer of two alpha chains, two beta chains and a gamma chain. Ni(2+) is required as a cofactor. It depends on iron-sulfur cluster as a cofactor. The cofactor is FAD.

It catalyses the reaction oxidized coenzyme F420-(gamma-L-Glu)(n) + H2 + H(+) = reduced coenzyme F420-(gamma-L-Glu)(n). Its function is as follows. Reduces the physiological low-potential two-electron acceptor coenzyme F420, and the artificial one-electron acceptor methylviologen. The protein is Coenzyme F420 hydrogenase subunit gamma (frhG) of Methanosarcina barkeri (strain Fusaro / DSM 804).